A 198-amino-acid polypeptide reads, in one-letter code: Pyridoxal 5'-phosphate synthase subunit PdxT (198 aa).

Residue 52-54 (GES) participates in L-glutamine binding. C84 acts as the Nucleophile in catalysis. Residues R115 and 143–144 (IR) contribute to the L-glutamine site. Residues H179 and E181 each act as charge relay system in the active site.

The protein belongs to the glutaminase PdxT/SNO family. In the presence of PdxS, forms a dodecamer of heterodimers. Only shows activity in the heterodimer.

It catalyses the reaction aldehydo-D-ribose 5-phosphate + D-glyceraldehyde 3-phosphate + L-glutamine = pyridoxal 5'-phosphate + L-glutamate + phosphate + 3 H2O + H(+). The enzyme catalyses L-glutamine + H2O = L-glutamate + NH4(+). Its pathway is cofactor biosynthesis; pyridoxal 5'-phosphate biosynthesis. Catalyzes the hydrolysis of glutamine to glutamate and ammonia as part of the biosynthesis of pyridoxal 5'-phosphate. The resulting ammonia molecule is channeled to the active site of PdxS. The protein is Pyridoxal 5'-phosphate synthase subunit PdxT of Methanococcoides burtonii (strain DSM 6242 / NBRC 107633 / OCM 468 / ACE-M).